The chain runs to 393 residues: NAD(P)H-quinone oxidoreductase subunit H, chloroplastic (393 aa).

This sequence belongs to the complex I 49 kDa subunit family. In terms of assembly, NDH is composed of at least 16 different subunits, 5 of which are encoded in the nucleus.

Its subcellular location is the plastid. The protein resides in the chloroplast thylakoid membrane. It carries out the reaction a plastoquinone + NADH + (n+1) H(+)(in) = a plastoquinol + NAD(+) + n H(+)(out). The enzyme catalyses a plastoquinone + NADPH + (n+1) H(+)(in) = a plastoquinol + NADP(+) + n H(+)(out). NDH shuttles electrons from NAD(P)H:plastoquinone, via FMN and iron-sulfur (Fe-S) centers, to quinones in the photosynthetic chain and possibly in a chloroplast respiratory chain. The immediate electron acceptor for the enzyme in this species is believed to be plastoquinone. Couples the redox reaction to proton translocation, and thus conserves the redox energy in a proton gradient. This chain is NAD(P)H-quinone oxidoreductase subunit H, chloroplastic, found in Nasturtium officinale (Watercress).